The chain runs to 164 residues: UPF0304 protein Asuc_0543 (164 aa).

It belongs to the UPF0304 family.

This Actinobacillus succinogenes (strain ATCC 55618 / DSM 22257 / CCUG 43843 / 130Z) protein is UPF0304 protein Asuc_0543.